Consider the following 797-residue polypeptide: LPS-assembly protein LptD (797 aa).

The first 30 residues, 1–30 (MKEGRKRLRAGYCYMLAGVVGVASTGSSRA), serve as a signal peptide directing secretion.

The protein belongs to the LptD family. Component of the lipopolysaccharide transport and assembly complex. Interacts with LptE and LptA.

It localises to the cell outer membrane. Functionally, together with LptE, is involved in the assembly of lipopolysaccharide (LPS) at the surface of the outer membrane. This is LPS-assembly protein LptD from Hahella chejuensis (strain KCTC 2396).